Here is a 153-residue protein sequence, read N- to C-terminus: Arginine repressor (153 aa).

Belongs to the ArgR family.

It is found in the cytoplasm. The protein operates within amino-acid biosynthesis; L-arginine biosynthesis [regulation]. In terms of biological role, regulates arginine biosynthesis genes. The protein is Arginine repressor of Actinobacillus pleuropneumoniae serotype 3 (strain JL03).